A 147-amino-acid chain; its full sequence is D-aminoacyl-tRNA deacylase (147 aa).

The Gly-cisPro motif, important for rejection of L-amino acids motif lies at G137–P138.

It belongs to the DTD family. As to quaternary structure, homodimer.

Its subcellular location is the cytoplasm. The enzyme catalyses glycyl-tRNA(Ala) + H2O = tRNA(Ala) + glycine + H(+). It carries out the reaction a D-aminoacyl-tRNA + H2O = a tRNA + a D-alpha-amino acid + H(+). An aminoacyl-tRNA editing enzyme that deacylates mischarged D-aminoacyl-tRNAs. Also deacylates mischarged glycyl-tRNA(Ala), protecting cells against glycine mischarging by AlaRS. Acts via tRNA-based rather than protein-based catalysis; rejects L-amino acids rather than detecting D-amino acids in the active site. By recycling D-aminoacyl-tRNA to D-amino acids and free tRNA molecules, this enzyme counteracts the toxicity associated with the formation of D-aminoacyl-tRNA entities in vivo and helps enforce protein L-homochirality. The chain is D-aminoacyl-tRNA deacylase from Jannaschia sp. (strain CCS1).